Reading from the N-terminus, the 145-residue chain is Protein BUD31 homolog 2 (145 aa).

This sequence belongs to the BUD31 (G10) family.

It is found in the nucleus. The polypeptide is Protein BUD31 homolog 2 (Oryza sativa subsp. japonica (Rice)).